The following is a 151-amino-acid chain: MTKTIYVLNGPNLNLLGTREPDIYGHHTLADVEALCRETAARFGLEAVCHQTNREGEIVDLIHEAAKKQAAGLIINGGGYSHTSVAIHDAIVGVQIPTVEVHVSNVYARERFRHQSFIAKAAFATLCGFGIEGYRLAILGLAARIGLAAKT.

Tyr24 serves as the catalytic Proton acceptor. 3 residues coordinate substrate: Asn76, His82, and Asp89. His102 functions as the Proton donor in the catalytic mechanism. Substrate-binding positions include 103-104 (VS) and Arg113.

This sequence belongs to the type-II 3-dehydroquinase family. In terms of assembly, homododecamer.

It carries out the reaction 3-dehydroquinate = 3-dehydroshikimate + H2O. It functions in the pathway metabolic intermediate biosynthesis; chorismate biosynthesis; chorismate from D-erythrose 4-phosphate and phosphoenolpyruvate: step 3/7. Functionally, catalyzes a trans-dehydration via an enolate intermediate. In Afipia carboxidovorans (strain ATCC 49405 / DSM 1227 / KCTC 32145 / OM5) (Oligotropha carboxidovorans), this protein is 3-dehydroquinate dehydratase.